The primary structure comprises 122 residues: Basic phospholipase A2 10 (122 aa).

7 disulfides stabilise this stretch: C26–C114, C28–C43, C42–C94, C48–C122, C49–C87, C56–C80, and C74–C85. Ca(2+) is bound by residues Y27, G29, and G31. H46 is a catalytic residue. D47 is a binding site for Ca(2+). D88 is an active-site residue.

Ca(2+) serves as cofactor. Expressed by the venom gland.

Its subcellular location is the secreted. The enzyme catalyses a 1,2-diacyl-sn-glycero-3-phosphocholine + H2O = a 1-acyl-sn-glycero-3-phosphocholine + a fatty acid + H(+). With respect to regulation, inhibited by chemical modifications mediated by p-BPB, anhydrous acetic acid and NBSF. In terms of biological role, snake venom phospholipase A2 (PLA2) that has a strong dose-dependent anticoagulant effect. In vivo, intramuscular and intervenal injection causes muscle necrosis. Induces moderate edema in the mouse foot pad. PLA2 catalyzes the calcium-dependent hydrolysis of the 2-acyl groups in 3-sn-phosphoglycerides. The chain is Basic phospholipase A2 10 from Crotalus durissus cumanensis (South American rattlesnake).